The chain runs to 512 residues: Bifunctional purine biosynthesis protein PurH (512 aa).

In terms of domain architecture, MGS-like spans 1-144 (MKRALVSVSD…KNYRDVVVVV (144 aa)).

Belongs to the PurH family.

It carries out the reaction (6R)-10-formyltetrahydrofolate + 5-amino-1-(5-phospho-beta-D-ribosyl)imidazole-4-carboxamide = 5-formamido-1-(5-phospho-D-ribosyl)imidazole-4-carboxamide + (6S)-5,6,7,8-tetrahydrofolate. It catalyses the reaction IMP + H2O = 5-formamido-1-(5-phospho-D-ribosyl)imidazole-4-carboxamide. It participates in purine metabolism; IMP biosynthesis via de novo pathway; 5-formamido-1-(5-phospho-D-ribosyl)imidazole-4-carboxamide from 5-amino-1-(5-phospho-D-ribosyl)imidazole-4-carboxamide (10-formyl THF route): step 1/1. Its pathway is purine metabolism; IMP biosynthesis via de novo pathway; IMP from 5-formamido-1-(5-phospho-D-ribosyl)imidazole-4-carboxamide: step 1/1. The chain is Bifunctional purine biosynthesis protein PurH from Ligilactobacillus salivarius (strain UCC118) (Lactobacillus salivarius).